Here is a 401-residue protein sequence, read N- to C-terminus: Splicing factor 45 (401 aa).

Residue S2 is modified to N-acetylserine. A Phosphoserine modification is found at S2. K15 is covalently cross-linked (Glycyl lysine isopeptide (Lys-Gly) (interchain with G-Cter in SUMO2)). Position 21 is an N6-acetyllysine (K21). Glycyl lysine isopeptide (Lys-Gly) (interchain with G-Cter in SUMO2) cross-links involve residues K24 and K33. K41 is subject to N6-acetyllysine; alternate. A Glycyl lysine isopeptide (Lys-Gly) (interchain with G-Cter in SUMO2); alternate cross-link involves residue K41. Residues L57–I68 are compositionally biased toward basic and acidic residues. Disordered regions lie at residues L57–P84 and R114–N233. K58 participates in a covalent cross-link: Glycyl lysine isopeptide (Lys-Gly) (interchain with G-Cter in SUMO2). The residue at position 71 (T71) is a Phosphothreonine. The segment covering R114 to P153 has biased composition (basic and acidic residues). Residues S155 and S169 each carry the phosphoserine modification. Residues V182–P200 are compositionally biased toward basic and acidic residues. A Phosphoserine modification is found at S222. The region spanning G235–T283 is the G-patch domain. A Phosphothreonine modification is found at T237. K256 participates in a covalent cross-link: Glycyl lysine isopeptide (Lys-Gly) (interchain with G-Cter in SUMO2). Residue S266 is modified to Phosphoserine. Residue K276 forms a Glycyl lysine isopeptide (Lys-Gly) (interchain with G-Cter in SUMO2) linkage. A phosphoserine mark is found at S291 and S293. One can recognise an RRM domain in the interval V306–C385.

Binds SXL. Associates with the spliceosome. Interacts with SF3B1, SF1 and U2AF2.

It is found in the nucleus. Its function is as follows. Splice factor that binds to the single-stranded 3'AG at the exon/intron border and promotes its utilization in the second catalytic step. Involved in the regulation of alternative splicing and the utilization of cryptic splice sites. Promotes the utilization of a cryptic splice site created by the beta-110 mutation in the HBB gene. The resulting frameshift leads to sickle cell anemia. This Homo sapiens (Human) protein is Splicing factor 45 (RBM17).